Consider the following 422-residue polypeptide: Mannose-1-phosphate guanylyltransferase regulatory subunit alpha-B (422 aa).

The substrate-binding domain stretch occupies residues Leu2–Ala253. 2 residues coordinate GDP-alpha-D-mannose: Glu85 and Gln249. Positions Leu275–Leu422 are hexapeptide repeat domain. The segment at Thr358–Ile386 is C-loop.

This sequence belongs to the transferase hexapeptide repeat family. In terms of assembly, component of the GMPPA-GMPPB mannose-1-phosphate guanylyltransferase complex composed of 4 GMPPA subunits and 8 GMPPB subunits; the complex is organized into three layers, a central layer made up of 2 GMPPA dimers sandwiched between two layers each made up of 2 GMPPB dimers.

The protein operates within nucleotide-sugar biosynthesis; GDP-alpha-D-mannose biosynthesis; GDP-alpha-D-mannose from alpha-D-mannose 1-phosphate (GTP route): step 1/1. In terms of biological role, regulatory subunit of the GMPPA-GMPPB mannose-1-phosphate guanylyltransferase complex; reduces the catalytic activity of GMPPB when part of the complex. Mediates allosteric feedback inhibition of GMPPB catalytic activity upon binding GDP-alpha-D-mannose. Together with GMPPB regulates GDP-alpha-D-mannose levels. One of two paralogs (gmppaa and gmppab) that may have redundant functions. This Danio rerio (Zebrafish) protein is Mannose-1-phosphate guanylyltransferase regulatory subunit alpha-B (gmppab).